The sequence spans 615 residues: Chromosomal replication initiator protein DnaA (615 aa).

Positions 1–88 are domain I, interacts with DnaA modulators; the sequence is MSEGQINLAM…RVAVTVDPSA (88 aa). The segment at 85-272 is disordered; the sequence is DPSAVPPSAP…PTSGGPDQLN (188 aa). The interval 88 to 269 is domain II; sequence AVPPSAPTEE…STNPTSGGPD (182 aa). Composition is skewed to low complexity over residues 94–112 and 173–190; these read PTEEASSTSSPDSSHPAPD and PSSADPGSPASPAPVAES. Positions 270-486 are domain III, AAA+ region; sequence QLNPKYTFDT…GALIRVTAFA (217 aa). 4 residues coordinate ATP: G314, G316, K317, and T318. A domain IV, binds dsDNA region spans residues 487–615; it reads SLNRQSVDLH…QQAHHNHHHL (129 aa).

Belongs to the DnaA family. As to quaternary structure, oligomerizes as a right-handed, spiral filament on DNA at oriC.

It is found in the cytoplasm. Its function is as follows. Plays an essential role in the initiation and regulation of chromosomal replication. ATP-DnaA binds to the origin of replication (oriC) to initiate formation of the DNA replication initiation complex once per cell cycle. Binds the DnaA box (a 9 base pair repeat at the origin) and separates the double-stranded (ds)DNA. Forms a right-handed helical filament on oriC DNA; dsDNA binds to the exterior of the filament while single-stranded (ss)DNA is stabiized in the filament's interior. The ATP-DnaA-oriC complex binds and stabilizes one strand of the AT-rich DNA unwinding element (DUE), permitting loading of DNA polymerase. After initiation quickly degrades to an ADP-DnaA complex that is not apt for DNA replication. Binds acidic phospholipids. The protein is Chromosomal replication initiator protein DnaA of Thermobifida fusca (strain YX).